We begin with the raw amino-acid sequence, 404 residues long: Tryptophan synthase beta chain (404 aa).

Residue Lys-98 is modified to N6-(pyridoxal phosphate)lysine.

The protein belongs to the TrpB family. As to quaternary structure, tetramer of two alpha and two beta chains. Pyridoxal 5'-phosphate is required as a cofactor.

The enzyme catalyses (1S,2R)-1-C-(indol-3-yl)glycerol 3-phosphate + L-serine = D-glyceraldehyde 3-phosphate + L-tryptophan + H2O. It participates in amino-acid biosynthesis; L-tryptophan biosynthesis; L-tryptophan from chorismate: step 5/5. The beta subunit is responsible for the synthesis of L-tryptophan from indole and L-serine. The protein is Tryptophan synthase beta chain of Rhodopseudomonas palustris (strain BisB5).